Consider the following 161-residue polypeptide: Large ribosomal subunit protein uL10 (161 aa).

It belongs to the universal ribosomal protein uL10 family. In terms of assembly, part of the ribosomal stalk of the 50S ribosomal subunit. The N-terminus interacts with L11 and the large rRNA to form the base of the stalk. The C-terminus forms an elongated spine to which L12 dimers bind in a sequential fashion forming a multimeric L10(L12)X complex.

Functionally, forms part of the ribosomal stalk, playing a central role in the interaction of the ribosome with GTP-bound translation factors. The polypeptide is Large ribosomal subunit protein uL10 (Malacoplasma penetrans (strain HF-2) (Mycoplasma penetrans)).